Here is a 350-residue protein sequence, read N- to C-terminus: tRNA dimethylallyltransferase (350 aa).

The segment at 1 to 20 (MMNTERPAGPLRPPHPPHPP) is disordered. The span at 10 to 20 (PLRPPHPPHPP) shows a compositional bias: pro residues. ATP is bound at residue 27–34 (GPTASGKT). Substrate is bound at residue 29-34 (TASGKT). Interaction with substrate tRNA stretches follow at residues 52–55 (DSAL), 176–180 (QRIAR), and 273–278 (RCVGYR).

The protein belongs to the IPP transferase family. As to quaternary structure, monomer. The cofactor is Mg(2+).

The enzyme catalyses adenosine(37) in tRNA + dimethylallyl diphosphate = N(6)-dimethylallyladenosine(37) in tRNA + diphosphate. Catalyzes the transfer of a dimethylallyl group onto the adenine at position 37 in tRNAs that read codons beginning with uridine, leading to the formation of N6-(dimethylallyl)adenosine (i(6)A). The polypeptide is tRNA dimethylallyltransferase (Albidiferax ferrireducens (strain ATCC BAA-621 / DSM 15236 / T118) (Rhodoferax ferrireducens)).